The primary structure comprises 329 residues: Phospho-N-acetylmuramoyl-pentapeptide-transferase (329 aa).

Transmembrane regions (helical) follow at residues 1 to 21, 53 to 73, 76 to 96, 109 to 129, 141 to 161, 175 to 195, 198 to 218, 237 to 257, and 309 to 329; these read MLLN…IGIP, MGGF…ALVF, FSPA…IGFL, GLTA…SYFI, ILSW…IWLV, GLAS…AVVH, YDVL…FVFN, FLAI…IGAV, and IVFW…YFAF.

This sequence belongs to the glycosyltransferase 4 family. MraY subfamily. Mg(2+) serves as cofactor.

The protein localises to the cell membrane. The enzyme catalyses UDP-N-acetyl-alpha-D-muramoyl-L-alanyl-gamma-D-glutamyl-L-lysyl-D-alanyl-D-alanine + di-trans,octa-cis-undecaprenyl phosphate = Mur2Ac(oyl-L-Ala-gamma-D-Glu-L-Lys-D-Ala-D-Ala)-di-trans,octa-cis-undecaprenyl diphosphate + UMP. It functions in the pathway cell wall biogenesis; peptidoglycan biosynthesis. In terms of biological role, catalyzes the initial step of the lipid cycle reactions in the biosynthesis of the cell wall peptidoglycan: transfers peptidoglycan precursor phospho-MurNAc-pentapeptide from UDP-MurNAc-pentapeptide onto the lipid carrier undecaprenyl phosphate, yielding undecaprenyl-pyrophosphoryl-MurNAc-pentapeptide, known as lipid I. The protein is Phospho-N-acetylmuramoyl-pentapeptide-transferase of Lactococcus lactis subsp. cremoris (strain SK11).